Here is a 234-residue protein sequence, read N- to C-terminus: Leucyl/phenylalanyl-tRNA--protein transferase (234 aa).

This sequence belongs to the L/F-transferase family.

The protein localises to the cytoplasm. The enzyme catalyses N-terminal L-lysyl-[protein] + L-leucyl-tRNA(Leu) = N-terminal L-leucyl-L-lysyl-[protein] + tRNA(Leu) + H(+). It carries out the reaction N-terminal L-arginyl-[protein] + L-leucyl-tRNA(Leu) = N-terminal L-leucyl-L-arginyl-[protein] + tRNA(Leu) + H(+). The catalysed reaction is L-phenylalanyl-tRNA(Phe) + an N-terminal L-alpha-aminoacyl-[protein] = an N-terminal L-phenylalanyl-L-alpha-aminoacyl-[protein] + tRNA(Phe). Functions in the N-end rule pathway of protein degradation where it conjugates Leu, Phe and, less efficiently, Met from aminoacyl-tRNAs to the N-termini of proteins containing an N-terminal arginine or lysine. The chain is Leucyl/phenylalanyl-tRNA--protein transferase from Hahella chejuensis (strain KCTC 2396).